A 450-amino-acid polypeptide reads, in one-letter code: Growth/differentiation factor 7 (450 aa).

A signal peptide spans 1-19; the sequence is MDLSAAAALCLWLLSACRP. A propeptide spanning residues 20–321 is cleaved from the precursor; that stretch reads RDGLEAAAVL…AVIGGRRRRR (302 aa). Asn-83 is a glycosylation site (N-linked (GlcNAc...) asparagine). A disordered region spans residues 296 to 349; the sequence is ASEPLPDPGTGTASPRAVIGGRRRRRTALAGTRTAQGSGGGAGRGHGRRGRSRC. Residues 340–349 show a composition bias toward basic residues; the sequence is GHGRRGRSRC. Cystine bridges form between Cys-349–Cys-415, Cys-378–Cys-447, and Cys-382–Cys-449.

It belongs to the TGF-beta family. In terms of assembly, homodimer; disulfide-linked.

Its subcellular location is the secreted. Its function is as follows. May play an active role in the motor area of the primate neocortex. The chain is Growth/differentiation factor 7 (GDF7) from Homo sapiens (Human).